Here is a 451-residue protein sequence, read N- to C-terminus: Glycylpeptide N-tetradecanoyltransferase (451 aa).

Residues 34-37 (YKFW), 167-169 (LCV), and 175-179 (SKRLT) contribute to the tetradecanoyl-CoA site. Leucine 451 functions as the Proton acceptor; via carboxylate in the catalytic mechanism.

It belongs to the NMT family. Monomer.

It localises to the cytoplasm. It catalyses the reaction N-terminal glycyl-[protein] + tetradecanoyl-CoA = N-tetradecanoylglycyl-[protein] + CoA + H(+). Adds a myristoyl group to the N-terminal glycine residue of certain cellular proteins. This chain is Glycylpeptide N-tetradecanoyltransferase (NMT1), found in Candida glabrata (strain ATCC 2001 / BCRC 20586 / JCM 3761 / NBRC 0622 / NRRL Y-65 / CBS 138) (Yeast).